The following is a 183-amino-acid chain: Translation initiation factor IF-3 (183 aa).

This sequence belongs to the IF-3 family. In terms of assembly, monomer.

The protein localises to the cytoplasm. Functionally, IF-3 binds to the 30S ribosomal subunit and shifts the equilibrium between 70S ribosomes and their 50S and 30S subunits in favor of the free subunits, thus enhancing the availability of 30S subunits on which protein synthesis initiation begins. In Pseudomonas putida (strain W619), this protein is Translation initiation factor IF-3.